A 1444-amino-acid chain; its full sequence is Protein shortage in chiasmata 1 ortholog (1444 aa).

A compositionally biased stretch (low complexity) spans 1106–1117 (SITKSPQISSPQ). Residues 1106–1129 (SITKSPQISSPQENRNQISTLSSQ) form a disordered region.

Belongs to the XPF family. Highly divergent. As to quaternary structure, interacts with TEX11. Interacts with SPO16.

It is found in the chromosome. Functionally, ATPase required during meiosis for the formation of crossover recombination intermediates. Binds DNA: preferentially binds to single-stranded DNA and DNA branched structures. Does not show nuclease activity in vitro, but shows ATPase activity, which is stimulated by the presence of single-stranded DNA. Plays a key role in homologous recombination and crossing-over in meiotic prophase I in male and female germ cells. Required for proper synaptonemal complex assembly and homologous chromosome pairing. Requiref for recruitment TEX11 and MSH4 to recombination intermediates. In Homo sapiens (Human), this protein is Protein shortage in chiasmata 1 ortholog.